A 581-amino-acid chain; its full sequence is Caprolactamase subunit beta (581 aa).

The Zn(2+) site is built by Asp-41, His-99, Asp-102, and His-124.

This sequence belongs to the HyuB family. As to quaternary structure, the caprolactamase is a heterotetramer composed of two alpha subunits (CapA) and two beta subunits (CapB). It depends on Zn(2+) as a cofactor.

Activity is dependent on the presence of ATP and bicarbonate. The requirement for bicarbonate may be related to allosteric activation through conformational effects, but it is also conceivable that carboxyphosphate is formed and acts as a mediator in caprolactam activation, forming carboxy- or phospholactim. Component of a caprolactamase involved in the degradation of caprolactam, an industrial compound mainly used in the production of Nylon 6. Catalyzes the ATP-dependent hydrolysis of the caprolactam ring to form 6-aminocaproic acid (6-ACA). The beta subunit is responsible for hydrolytic lactam ring opening. The enzyme cannot use 5-oxoproline. In Pseudomonas jessenii, this protein is Caprolactamase subunit beta.